The sequence spans 253 residues: Trans-aconitate 2-methyltransferase (253 aa).

This sequence belongs to the methyltransferase superfamily. Tam family.

The protein resides in the cytoplasm. It catalyses the reaction trans-aconitate + S-adenosyl-L-methionine = (E)-3-(methoxycarbonyl)pent-2-enedioate + S-adenosyl-L-homocysteine. Functionally, catalyzes the S-adenosylmethionine monomethyl esterification of trans-aconitate. In Klebsiella pneumoniae (strain 342), this protein is Trans-aconitate 2-methyltransferase.